The sequence spans 118 residues: Small ribosomal subunit protein uS13 (118 aa).

Residues 94 to 118 form a disordered region; the sequence is SLPLRGQRTKTNARTRKGPRKPIKK.

It belongs to the universal ribosomal protein uS13 family. As to quaternary structure, part of the 30S ribosomal subunit. Forms a loose heterodimer with protein S19. Forms two bridges to the 50S subunit in the 70S ribosome.

Its function is as follows. Located at the top of the head of the 30S subunit, it contacts several helices of the 16S rRNA. In the 70S ribosome it contacts the 23S rRNA (bridge B1a) and protein L5 of the 50S subunit (bridge B1b), connecting the 2 subunits; these bridges are implicated in subunit movement. Contacts the tRNAs in the A and P-sites. In Idiomarina loihiensis (strain ATCC BAA-735 / DSM 15497 / L2-TR), this protein is Small ribosomal subunit protein uS13.